Here is a 91-residue protein sequence, read N- to C-terminus: DNA-directed RNA polymerase subunit omega (91 aa).

Belongs to the RNA polymerase subunit omega family. As to quaternary structure, the RNAP catalytic core consists of 2 alpha, 1 beta, 1 beta' and 1 omega subunit. When a sigma factor is associated with the core the holoenzyme is formed, which can initiate transcription.

The catalysed reaction is RNA(n) + a ribonucleoside 5'-triphosphate = RNA(n+1) + diphosphate. Functionally, promotes RNA polymerase assembly. Latches the N- and C-terminal regions of the beta' subunit thereby facilitating its interaction with the beta and alpha subunits. This is DNA-directed RNA polymerase subunit omega from Sodalis glossinidius (strain morsitans).